A 570-amino-acid chain; its full sequence is Glutamate--tRNA ligase (570 aa).

A 'HIGH' region motif is present at residues Pro107–Ser117.

This sequence belongs to the class-I aminoacyl-tRNA synthetase family. Glutamate--tRNA ligase type 2 subfamily.

It localises to the cytoplasm. It catalyses the reaction tRNA(Glu) + L-glutamate + ATP = L-glutamyl-tRNA(Glu) + AMP + diphosphate. Catalyzes the attachment of glutamate to tRNA(Glu) in a two-step reaction: glutamate is first activated by ATP to form Glu-AMP and then transferred to the acceptor end of tRNA(Glu). The sequence is that of Glutamate--tRNA ligase from Pyrobaculum calidifontis (strain DSM 21063 / JCM 11548 / VA1).